The primary structure comprises 483 residues: Allantoate deiminase 2 (483 aa).

A signal peptide spans 1-30 (MSSATASNTFFLHSCFLLFCLLSAPSCVSM). Residues His-125, Asp-136, Glu-173, His-239, and His-457 each contribute to the Mn(2+) site.

This sequence belongs to the peptidase M20A family. In terms of assembly, homodimer. It depends on Mn(2+) as a cofactor. As to expression, expressed in stems and leaves, and at low levels in roots. Not detected in nodules.

It is found in the endoplasmic reticulum. The enzyme catalyses allantoate + H2O + 2 H(+) = (S)-2-ureidoglycine + NH4(+) + CO2. Functionally, involved in the catabolism of purine nucleotides. Can use allantoate as substrate. The sequential activity of AAH, UGLYAH and UAH allows a complete purine breakdown without the intermediate generation of urea. The polypeptide is Allantoate deiminase 2 (Glycine max (Soybean)).